The primary structure comprises 348 residues: F(420)H(2) dehydrogenase subunit H (348 aa).

A run of 8 helical transmembrane segments spans residues 20–40, 93–113, 127–147, 172–192, 198–218, 259–279, 286–306, and 328–348; these read GVVGLVLVGAIFLGAMGAVWL, IFMMSSVFLMLVAIPVGAVFI, ISVLYIEAMSAITIFGIFMIA, PLGITVVSVAIMTGSLNIVEI, LLWNIFLQPIGFIVFFIALMA, ILGSFLVALLFLGGWNVPAFV, GLIAPTGFFLLKTVLVLMTII, and LLPLSLLNLVWAVGLGLYLGA.

The protein belongs to the complex I subunit 1 family. The FPO complex is composed of at least 13 different subunits. FpoA, FpoH, FpoJ, FpoK, FpoL, FpoM and FpoN proteins constitute the membrane sector of the complex.

The protein resides in the cell membrane. The enzyme catalyses methanophenazine + reduced coenzyme F420-(gamma-L-Glu)(n) = dihydromethanophenazine + oxidized coenzyme F420-(gamma-L-Glu)(n) + H(+). Functionally, component of the F(420)H(2) dehydrogenase (FPO complex) which is part of the energy-conserving F(420)H(2):heterodisulfide oxidoreductase system. The membrane-bound electron transfer system of the complex plays an important role in the metabolism of methylotrophic methanogens when the organisms grow on methanol or methylamines. Catalyzes the oxidation of methanophenazine to dihydromethanophenazine. It shuttles electrons from F(420)H(2), via FAD and iron-sulfur (Fe-S) centers, to methanophenazine (an electron carrier in the membrane). It couples the redox reaction to proton translocation (for every two electrons transferred, two hydrogen ions are translocated across the cytoplasmic membrane), and thus conserves the redox energy in a proton gradient. In Methanosarcina acetivorans (strain ATCC 35395 / DSM 2834 / JCM 12185 / C2A), this protein is F(420)H(2) dehydrogenase subunit H.